The chain runs to 90 residues: Small ribosomal subunit protein bS16 (90 aa).

The protein belongs to the bacterial ribosomal protein bS16 family.

In Lactococcus lactis subsp. cremoris (strain MG1363), this protein is Small ribosomal subunit protein bS16.